The chain runs to 241 residues: Bidirectional sugar transporter SWEET17 (241 aa).

Over 1 to 3 (MAE) the chain is Vacuolar. The chain crosses the membrane as a helical span at residues 4-24 (ASFYIGVIGNVISVLVFLSPV). Residues 6–92 (FYIGVIGNVI…SLFLFYAPRH (87 aa)) enclose the MtN3/slv 1 domain. At 25–41 (ETFWKIVKRRSTEEYKS) the chain is on the cytoplasmic side. Residues 42 to 62 (LPYICTLLGSSLWTYYGIVTP) form a helical membrane-spanning segment. Residues 63–69 (GEYLVST) are Vacuolar-facing. A helical membrane pass occupies residues 70–90 (VNGFGALVETIYVSLFLFYAP). The Cytoplasmic portion of the chain corresponds to 91 to 94 (RHLK). The helical transmembrane segment at 95-115 (LKTVDVDAMLNVFFPIAAIVA) threads the bilayer. Topologically, residues 116–128 (TRSAFEDEKMRSQ) are vacuolar. Residues 129 to 149 (SIGFISAGLNIIMYGSPLSAM) traverse the membrane as a helical segment. Positions 129–212 (SIGFISAGLN…LILYGIYRNA (84 aa)) constitute a MtN3/slv 2 domain. The Cytoplasmic segment spans residues 150–161 (KTVVTTKSVKYM). A helical transmembrane segment spans residues 162-182 (PFWLSFFLFLNGAIWAVYALL). Residues 183–185 (QHD) lie on the Vacuolar side of the membrane. Residues 186–206 (VFLLVPNGVGFVFGTMQLILY) traverse the membrane as a helical segment. At 207 to 241 (GIYRNAKPVGLSNGLSEIAQDEEEGLTSRVEPLLS) the chain is on the cytoplasmic side.

The protein belongs to the SWEET sugar transporter family. Forms homooligomers and heterooligomers with SWEET1, SWEET2, SWEET3, SWEET4, SWEET6, SWEET7, SWEET8, SWEET9, SWEET11, SWEET12, SWEET13, SWEET15 and SWEET16. Expressed in leaves at low levels, mostly in xylem and parenchyma. Highly expressed in the cortex of roots, predominantly in tips and mature regions, especially in tonoplasts. Also accumulates in cotyledons, stems, flowers, and siliques.

The protein localises to the vacuole membrane. Acts as a vacuolar hexose transporter. Regulates fructose (Fru) homeostasis in leaves and roots by exporting/importing Fru through the tonoplast regarding metabolic demand. In Arabidopsis thaliana (Mouse-ear cress), this protein is Bidirectional sugar transporter SWEET17.